The sequence spans 755 residues: 1,4-alpha-glucan branching enzyme GlgB (755 aa).

Aspartate 435 serves as the catalytic Nucleophile. Glutamate 488 acts as the Proton donor in catalysis.

The protein belongs to the glycosyl hydrolase 13 family. GlgB subfamily. In terms of assembly, monomer.

It catalyses the reaction Transfers a segment of a (1-&gt;4)-alpha-D-glucan chain to a primary hydroxy group in a similar glucan chain.. Its pathway is glycan biosynthesis; glycogen biosynthesis. Functionally, catalyzes the formation of the alpha-1,6-glucosidic linkages in glycogen by scission of a 1,4-alpha-linked oligosaccharide from growing alpha-1,4-glucan chains and the subsequent attachment of the oligosaccharide to the alpha-1,6 position. In Vibrio parahaemolyticus serotype O3:K6 (strain RIMD 2210633), this protein is 1,4-alpha-glucan branching enzyme GlgB.